A 371-amino-acid polypeptide reads, in one-letter code: Aspartate-semialdehyde dehydrogenase (371 aa).

NADP(+)-binding positions include arginine 10–valine 13, threonine 37–serine 38, and glutamine 74. Arginine 103 is a phosphate binding site. The active-site Acyl-thioester intermediate is the cysteine 136. Position 163 (glutamine 163) interacts with substrate. Residue serine 166 coordinates NADP(+). Residue glutamate 243 participates in substrate binding. Lysine 246 is a phosphate binding site. Residue arginine 270 coordinates substrate. The active-site Proton acceptor is histidine 277. Glutamine 353 is an NADP(+) binding site.

Belongs to the aspartate-semialdehyde dehydrogenase family. In terms of assembly, homodimer.

It catalyses the reaction L-aspartate 4-semialdehyde + phosphate + NADP(+) = 4-phospho-L-aspartate + NADPH + H(+). The protein operates within amino-acid biosynthesis; L-lysine biosynthesis via DAP pathway; (S)-tetrahydrodipicolinate from L-aspartate: step 2/4. Its pathway is amino-acid biosynthesis; L-methionine biosynthesis via de novo pathway; L-homoserine from L-aspartate: step 2/3. It participates in amino-acid biosynthesis; L-threonine biosynthesis; L-threonine from L-aspartate: step 2/5. Functionally, catalyzes the NADPH-dependent formation of L-aspartate-semialdehyde (L-ASA) by the reductive dephosphorylation of L-aspartyl-4-phosphate. This is Aspartate-semialdehyde dehydrogenase from Haemophilus influenzae (strain ATCC 51907 / DSM 11121 / KW20 / Rd).